A 628-amino-acid chain; its full sequence is Isoleucine--tRNA ligase (628 aa).

The 'KMSKS' region motif lies at 505 to 509 (KMSKR). Residue Lys-508 participates in ATP binding.

It belongs to the class-I aminoacyl-tRNA synthetase family.

It catalyses the reaction tRNA(Ile) + L-isoleucine + ATP = L-isoleucyl-tRNA(Ile) + AMP + diphosphate. This Antonospora locustae (Microsporidian parasite) protein is Isoleucine--tRNA ligase.